A 196-amino-acid polypeptide reads, in one-letter code: Beta-crystallin A4 (196 aa).

Threonine 2 is modified (N-acetylthreonine). The tract at residues 2-11 (TLQCTKSAGP) is N-terminal arm. 2 Beta/gamma crystallin 'Greek key' domains span residues 12–51 (WKMV…KVLS) and 52–98 (GAWV…RPAA). The connecting peptide stretch occupies residues 99 to 104 (CANHRD). Beta/gamma crystallin 'Greek key' domains follow at residues 105–146 (SRLT…HVHS) and 147–195 (GAWV…RRIQ).

It belongs to the beta/gamma-crystallin family. In terms of assembly, homo/heterodimer, or complexes of higher-order. The structure of beta-crystallin oligomers seems to be stabilized through interactions between the N-terminal arms.

In terms of biological role, crystallins are the dominant structural components of the vertebrate eye lens. The sequence is that of Beta-crystallin A4 (CRYBA4) from Homo sapiens (Human).